A 499-amino-acid chain; its full sequence is Probable cytosol aminopeptidase (499 aa).

Mn(2+) contacts are provided by lysine 263 and aspartate 268. Residue lysine 275 is part of the active site. Mn(2+) is bound by residues aspartate 286, aspartate 345, and glutamate 347. The active site involves arginine 349.

Belongs to the peptidase M17 family. It depends on Mn(2+) as a cofactor.

It is found in the cytoplasm. It catalyses the reaction Release of an N-terminal amino acid, Xaa-|-Yaa-, in which Xaa is preferably Leu, but may be other amino acids including Pro although not Arg or Lys, and Yaa may be Pro. Amino acid amides and methyl esters are also readily hydrolyzed, but rates on arylamides are exceedingly low.. The enzyme catalyses Release of an N-terminal amino acid, preferentially leucine, but not glutamic or aspartic acids.. Presumably involved in the processing and regular turnover of intracellular proteins. Catalyzes the removal of unsubstituted N-terminal amino acids from various peptides. This chain is Probable cytosol aminopeptidase, found in Chlamydia trachomatis serovar L2 (strain ATCC VR-902B / DSM 19102 / 434/Bu).